A 206-amino-acid chain; its full sequence is Mediator of RNA polymerase II transcription subunit 19 (206 aa).

The segment at 171 to 206 is disordered; that stretch reads GTGTKTKKRKYKSNGSSMASPNTELQPDDMKRRRLE. Positions 183–195 are enriched in polar residues; sequence SNGSSMASPNTEL.

It belongs to the Mediator complex subunit 19 family. Component of the Mediator complex.

It localises to the nucleus. In terms of biological role, component of the Mediator complex, a coactivator involved in the regulated transcription of nearly all RNA polymerase II-dependent genes. Mediator functions as a bridge to convey information from gene-specific regulatory proteins to the basal RNA polymerase II transcription machinery. Mediator is recruited to promoters by direct interactions with regulatory proteins and serves as a scaffold for the assembly of a functional preinitiation complex with RNA polymerase II and the general transcription factors. This is Mediator of RNA polymerase II transcription subunit 19 (ROX3) from Kluyveromyces lactis (strain ATCC 8585 / CBS 2359 / DSM 70799 / NBRC 1267 / NRRL Y-1140 / WM37) (Yeast).